The sequence spans 133 residues: Ribosome-binding factor A (133 aa).

This sequence belongs to the RbfA family. As to quaternary structure, monomer. Binds 30S ribosomal subunits, but not 50S ribosomal subunits or 70S ribosomes.

The protein localises to the cytoplasm. In terms of biological role, one of several proteins that assist in the late maturation steps of the functional core of the 30S ribosomal subunit. Associates with free 30S ribosomal subunits (but not with 30S subunits that are part of 70S ribosomes or polysomes). Required for efficient processing of 16S rRNA. May interact with the 5'-terminal helix region of 16S rRNA. The polypeptide is Ribosome-binding factor A (Bordetella parapertussis (strain 12822 / ATCC BAA-587 / NCTC 13253)).